The chain runs to 64 residues: Large ribosomal subunit protein bL33 (64 aa).

Residues 16–25 are compositionally biased toward basic and acidic residues; it reads EARTSSEPRR. Residues 16–41 are disordered; that stretch reads EARTSSEPRRSNGVSRYTTEKNKRNT.

It belongs to the bacterial ribosomal protein bL33 family.

This is Large ribosomal subunit protein bL33 from Prochlorococcus marinus subsp. pastoris (strain CCMP1986 / NIES-2087 / MED4).